A 57-amino-acid polypeptide reads, in one-letter code: Putative secreted protein ML2569.1 (57 aa).

The first 32 residues, 1-32 (MSRIVAPAAASVVVGLLLGAATIFGMTLMVQQ), serve as a signal peptide directing secretion. The interval 34–57 (TKPPLPGGDPQSSVLNRVEYGNRT) is disordered.

The chain is Putative secreted protein ML2569.1 from Mycobacterium leprae (strain TN).